The primary structure comprises 144 residues: NADH dehydrogenase [ubiquinone] 1 alpha subcomplex subunit 13 (144 aa).

Position 2 is an N-acetylalanine (alanine 2). Residues 30 to 51 (LSGYSMLAIGIGTLIYGHWSIM) form a helical membrane-spanning segment. The interval 102 to 144 (PDWKVGESVFHTTRWVPPLIGELYGLRTTEEALHASHGFMWYT) is important for inducing cell death.

The protein belongs to the complex I NDUFA13 subunit family. As to quaternary structure, complex I is composed of 45 different subunits. Interacts with CARD15, but not with CARD4. Interacts with STAT3, but not with STAT1, STAT2 and STAT5A. Interacts with OLFM4. (Microbial infection) Interacts with HHV-8 IRF1, in the nucleus, with HPV-16 E6 and SV40 LT. Widely expressed, with highest expression in heart, skeletal muscle, liver, kidney and placenta. In intestinal mucosa, down-regulated in areas involved in Crohn disease and ulcerative colitis.

It localises to the mitochondrion inner membrane. The protein localises to the nucleus. Functionally, accessory subunit of the mitochondrial membrane respiratory chain NADH dehydrogenase (Complex I), that is believed not to be involved in catalysis. Complex I functions in the transfer of electrons from NADH to the respiratory chain. The immediate electron acceptor for the enzyme is believed to be ubiquinone. Involved in the interferon/all-trans-retinoic acid (IFN/RA) induced cell death. This apoptotic activity is inhibited by interaction with viral IRF1. Prevents the transactivation of STAT3 target genes. May play a role in CARD15-mediated innate mucosal responses and serve to regulate intestinal epithelial cell responses to microbes. This is NADH dehydrogenase [ubiquinone] 1 alpha subcomplex subunit 13 (NDUFA13) from Homo sapiens (Human).